Here is a 451-residue protein sequence, read N- to C-terminus: Tubulin alpha-2 chain (451 aa).

GTP-binding residues include Q12, D73, S142, G146, T147, T181, N208, and N230. D73 contributes to the Mg(2+) binding site. The active site involves E256.

Belongs to the tubulin family. In terms of assembly, dimer of alpha and beta chains. A typical microtubule is a hollow water-filled tube with an outer diameter of 25 nm and an inner diameter of 15 nM. Alpha-beta heterodimers associate head-to-tail to form protofilaments running lengthwise along the microtubule wall with the beta-tubulin subunit facing the microtubule plus end conferring a structural polarity. Microtubules usually have 13 protofilaments but different protofilament numbers can be found in some organisms and specialized cells. Mg(2+) serves as cofactor.

Its subcellular location is the cytoplasm. It localises to the cytoskeleton. It carries out the reaction GTP + H2O = GDP + phosphate + H(+). Tubulin is the major constituent of microtubules, a cylinder consisting of laterally associated linear protofilaments composed of alpha- and beta-tubulin heterodimers. Microtubules grow by the addition of GTP-tubulin dimers to the microtubule end, where a stabilizing cap forms. Below the cap, tubulin dimers are in GDP-bound state, owing to GTPase activity of alpha-tubulin. This is Tubulin alpha-2 chain (tubB) from Emericella nidulans (strain FGSC A4 / ATCC 38163 / CBS 112.46 / NRRL 194 / M139) (Aspergillus nidulans).